The chain runs to 429 residues: D-amino acid dehydrogenase (429 aa).

FAD is bound at residue 3–17 (VVVLGSGVVGVTSAY).

The protein belongs to the DadA oxidoreductase family. Requires FAD as cofactor.

It catalyses the reaction a D-alpha-amino acid + A + H2O = a 2-oxocarboxylate + AH2 + NH4(+). It participates in amino-acid degradation; D-alanine degradation; NH(3) and pyruvate from D-alanine: step 1/1. Functionally, oxidative deamination of D-amino acids. This chain is D-amino acid dehydrogenase, found in Paraburkholderia xenovorans (strain LB400).